The sequence spans 188 residues: Elongation factor P (188 aa).

Lys-34 is modified (N6-(3,6-diaminohexanoyl)-5-hydroxylysine).

Belongs to the elongation factor P family. In terms of processing, may be beta-lysylated on the epsilon-amino group of Lys-34 by the combined action of EpmA and EpmB, and then hydroxylated on the C5 position of the same residue by EpmC (if this protein is present). Lysylation is critical for the stimulatory effect of EF-P on peptide-bond formation. The lysylation moiety may extend toward the peptidyltransferase center and stabilize the terminal 3-CCA end of the tRNA. Hydroxylation of the C5 position on Lys-34 may allow additional potential stabilizing hydrogen-bond interactions with the P-tRNA.

It is found in the cytoplasm. Its pathway is protein biosynthesis; polypeptide chain elongation. Functionally, involved in peptide bond synthesis. Alleviates ribosome stalling that occurs when 3 or more consecutive Pro residues or the sequence PPG is present in a protein, possibly by augmenting the peptidyl transferase activity of the ribosome. Modification of Lys-34 is required for alleviation. This Photorhabdus laumondii subsp. laumondii (strain DSM 15139 / CIP 105565 / TT01) (Photorhabdus luminescens subsp. laumondii) protein is Elongation factor P.